The primary structure comprises 771 residues: U-box domain-containing protein 6 (771 aa).

In terms of domain architecture, U-box spans 274–348; that stretch reads IPPEELRCPI…ASWCEQNGIT (75 aa). Positions 394–415 are disordered; sequence EESSTIESERQQKEKNNAPDEV. The segment covering 400-411 has biased composition (basic and acidic residues); the sequence is ESERQQKEKNNA. 5 ARM repeats span residues 456–499, 502–542, 544–581, 583–622, and 625–664; these read EEAR…NLAV, NRNK…CLEK, KPVIGSSQAVSFFVNLLLQDTKTQCKLDALHALYNLST, SPNIPTLLSSNIIKSLQVLASTGNHLWIEKSLAVLLNLAS, and EGKEEMITTQGMISTLATVLDTGDTVEQEQAVSCLVILCT. The segment covering 706–722 has biased composition (basic and acidic residues); the sequence is EQRHRDQPSPNKEEAPR. The segment at 706–751 is disordered; it reads EQRHRDQPSPNKEEAPRKTVSAPMAIPAPVSAPESEVKPLTKSISR.

It catalyses the reaction S-ubiquitinyl-[E2 ubiquitin-conjugating enzyme]-L-cysteine + [acceptor protein]-L-lysine = [E2 ubiquitin-conjugating enzyme]-L-cysteine + N(6)-ubiquitinyl-[acceptor protein]-L-lysine.. The protein operates within protein modification; protein ubiquitination. Functionally, functions as an E3 ubiquitin ligase. The chain is U-box domain-containing protein 6 (PUB6) from Arabidopsis thaliana (Mouse-ear cress).